The chain runs to 599 residues: Sulfite reductase [NADPH] flavoprotein alpha-component (599 aa).

Positions 63-201 (ITVISASQTG…LATAWRKQVV (139 aa)) constitute a Flavodoxin-like domain. Residues 69 to 74 (SQTGNA), 116 to 119 (STQG), and 152 to 161 (LGDTSYENFC) each bind FMN. Residues 234-448 (EQPLTAQLAV…IEHNDNFRLP (215 aa)) enclose the FAD-binding FR-type domain. FAD contacts are provided by residues Thr322, His356, 386 to 389 (RLYS), 404 to 406 (TVG), Tyr410, and 419 to 422 (GGAS). NADP(+) contacts are provided by residues 519–520 (SR), 525–529 (KVYVQ), and Asp561. Tyr599 is a binding site for FAD.

This sequence belongs to the NADPH-dependent sulphite reductase flavoprotein subunit CysJ family. The protein in the N-terminal section; belongs to the flavodoxin family. It in the C-terminal section; belongs to the flavoprotein pyridine nucleotide cytochrome reductase family. Alpha(8)-beta(8). The alpha component is a flavoprotein, the beta component is a hemoprotein. FAD serves as cofactor. Requires FMN as cofactor.

It carries out the reaction hydrogen sulfide + 3 NADP(+) + 3 H2O = sulfite + 3 NADPH + 4 H(+). It functions in the pathway sulfur metabolism; hydrogen sulfide biosynthesis; hydrogen sulfide from sulfite (NADPH route): step 1/1. Its function is as follows. Component of the sulfite reductase complex that catalyzes the 6-electron reduction of sulfite to sulfide. This is one of several activities required for the biosynthesis of L-cysteine from sulfate. The flavoprotein component catalyzes the electron flow from NADPH -&gt; FAD -&gt; FMN to the hemoprotein component. The polypeptide is Sulfite reductase [NADPH] flavoprotein alpha-component (Serratia proteamaculans (strain 568)).